A 141-amino-acid chain; its full sequence is MFIYRLVFIAPLILLLFSLAKARHPFDIFHWNWQDFQECLQVNNITIGEYEKYARHETLDYLLNEKVDLRYKCNIKCQLERDSTKWLNAQGRMDLDLMNTTDKASKSITKCMEKAPEELCAYSFRLVMCAFKAGHPVIDSE.

A signal peptide spans 1-22 (MFIYRLVFIAPLILLLFSLAKA). Intrachain disulfides connect C39–C77, C73–C120, and C111–C129.

This sequence belongs to the PBP/GOBP family.

Present in the aqueous fluid surrounding olfactory sensory dendrites and are thought to aid in the capture and transport of hydrophobic odorants into and through this fluid. This chain is General odorant-binding protein 57b, found in Drosophila melanogaster (Fruit fly).